We begin with the raw amino-acid sequence, 543 residues long: CTP synthase (543 aa).

An amidoligase domain region spans residues 1 to 270; the sequence is MNNLTSTKFI…DTQILKHFNI (270 aa). Ser-18 provides a ligand contact to CTP. Ser-18 serves as a coordination point for UTP. ATP-binding positions include 19-24 and Asp-76; that span reads SLGKGL. Mg(2+) is bound by residues Asp-76 and Glu-144. CTP-binding positions include 151–153, 191–196, and Lys-227; these read DIE and KTKPTQ. UTP-binding positions include 191–196 and Lys-227; that span reads KTKPTQ. Residues 295 to 537 enclose the Glutamine amidotransferase type-1 domain; sequence TIAIIGKYIK…IQASLNYQET (243 aa). Gly-356 is an L-glutamine binding site. Cys-383 serves as the catalytic Nucleophile; for glutamine hydrolysis. L-glutamine contacts are provided by residues 384 to 387, Glu-407, and Arg-462; that span reads MGMQ. Residues His-510 and Glu-512 contribute to the active site.

This sequence belongs to the CTP synthase family. Homotetramer.

It carries out the reaction UTP + L-glutamine + ATP + H2O = CTP + L-glutamate + ADP + phosphate + 2 H(+). The catalysed reaction is L-glutamine + H2O = L-glutamate + NH4(+). It catalyses the reaction UTP + NH4(+) + ATP = CTP + ADP + phosphate + 2 H(+). The protein operates within pyrimidine metabolism; CTP biosynthesis via de novo pathway; CTP from UDP: step 2/2. With respect to regulation, allosterically activated by GTP, when glutamine is the substrate; GTP has no effect on the reaction when ammonia is the substrate. The allosteric effector GTP functions by stabilizing the protein conformation that binds the tetrahedral intermediate(s) formed during glutamine hydrolysis. Inhibited by the product CTP, via allosteric rather than competitive inhibition. Catalyzes the ATP-dependent amination of UTP to CTP with either L-glutamine or ammonia as the source of nitrogen. Regulates intracellular CTP levels through interactions with the four ribonucleotide triphosphates. This Ehrlichia ruminantium (strain Gardel) protein is CTP synthase.